The following is a 179-amino-acid chain: Adenine phosphoribosyltransferase (179 aa).

The protein belongs to the purine/pyrimidine phosphoribosyltransferase family. In terms of assembly, homodimer.

It is found in the cytoplasm. The catalysed reaction is AMP + diphosphate = 5-phospho-alpha-D-ribose 1-diphosphate + adenine. The protein operates within purine metabolism; AMP biosynthesis via salvage pathway; AMP from adenine: step 1/1. Catalyzes a salvage reaction resulting in the formation of AMP, that is energically less costly than de novo synthesis. In Methylacidiphilum infernorum (isolate V4) (Methylokorus infernorum (strain V4)), this protein is Adenine phosphoribosyltransferase.